The primary structure comprises 644 residues: uncharacterized protein (644 aa).

The disordered stretch occupies residues 1 to 35; the sequence is MKANGLDNDPARTGMERTDIDSEHPEAQPLLNNNH. Residues 1–90 lie on the Cytoplasmic side of the membrane; it reads MKANGLDNDP…ILNILILINT (90 aa). Positions 14–26 are enriched in basic and acidic residues; the sequence is GMERTDIDSEHPE. Phosphoserine occurs at positions 22, 56, and 63. Residues 91–111 form a helical membrane-spanning segment; that stretch reads IWLVTTLISDFFFNINILFGF. At 112–122 the chain is on the vacuolar side; the sequence is SNRYASFNDLT. The chain crosses the membrane as a helical span at residues 123-143; the sequence is LIFISIIANSFNLWFNKLGLY. Residues 144-147 lie on the Cytoplasmic side of the membrane; sequence SALD. The helical transmembrane segment at 148–168 threads the bilayer; it reads YSLNVTLCVLTLFNLALTYLI. At 169–174 the chain is on the vacuolar side; sequence KYTRQR. A helical membrane pass occupies residues 175 to 195; it reads IGFVGTFTYLWTSFSFFIGAI. Topologically, residues 196–271 are cytoplasmic; sequence LDWYLLFYNN…EWVSIGFRNT (76 aa). The disordered stretch occupies residues 225-251; sequence NENHTNSTENRDRSQYGSGSPTPTHRS. The segment covering 239–251 has biased composition (polar residues); sequence QYGSGSPTPTHRS. Ser244 is subject to Phosphoserine. A helical transmembrane segment spans residues 272–292; it reads IKFLILIFFALFTLNTLLTTL. The Vacuolar portion of the chain corresponds to 293–644; that stretch reads DTYRLTHKLP…IGELGKLTED (352 aa). The 272-residue stretch at 348–619 folds into the AB hydrolase-1 domain; sequence PIILFEHGGY…IVEGGHEIYK (272 aa). The disordered stretch occupies residues 469 to 492; sequence GRGDGDDGDDGNGNDGDGRNHDKT.

The protein localises to the vacuole membrane. This is an uncharacterized protein from Saccharomyces cerevisiae (strain ATCC 204508 / S288c) (Baker's yeast).